The primary structure comprises 663 residues: NAD(P)H-quinone oxidoreductase subunit 5, chloroplastic (663 aa).

A run of 16 helical transmembrane segments spans residues 11–31, 41–61, 89–109, 126–146, 149–169, 189–209, 224–244, 260–280, 292–312, 329–349, 398–418, 436–456, 482–502, 528–548, 607–627, and 635–655; these read WLIPMLPFLSAFVAGFGLISF, LYGLISTITVFFSMIISMNLL, FFIDPLSSLMLFLVTSVAVLV, FFAYLSLFTASMLGLVLSPNL, IYIFWELVGMCSYLLIGFWFT, FCLLLGILGLYWFTNSFDFIT, HLYFFIFCSFLLFCGPIAKSA, TPISALIHAATMVAAGIFLVA, IMNLITCIGILTAFLGSTIAL, LGYMMVAMGIGSYKAGLFHLV, FTFLIGTLSLCGVPPFACFWS, IAWITAGLTGFYMFRVYLLAF, LYMLIPLIILSFLSLFIGFIS, ILLNFSSIGVALIGMIIAYSI, WLFDGVVNLTGISTLLGGQSL, and VSSYLFSILIGALVLFFFLPL.

Belongs to the complex I subunit 5 family. In terms of assembly, NDH is composed of at least 16 different subunits, 5 of which are encoded in the nucleus.

The protein resides in the plastid. It localises to the chloroplast thylakoid membrane. The catalysed reaction is a plastoquinone + NADH + (n+1) H(+)(in) = a plastoquinol + NAD(+) + n H(+)(out). The enzyme catalyses a plastoquinone + NADPH + (n+1) H(+)(in) = a plastoquinol + NADP(+) + n H(+)(out). In terms of biological role, NDH shuttles electrons from NAD(P)H:plastoquinone, via FMN and iron-sulfur (Fe-S) centers, to quinones in the photosynthetic chain and possibly in a chloroplast respiratory chain. The immediate electron acceptor for the enzyme in this species is believed to be plastoquinone. Couples the redox reaction to proton translocation, and thus conserves the redox energy in a proton gradient. The polypeptide is NAD(P)H-quinone oxidoreductase subunit 5, chloroplastic (ndhF) (Chara vulgaris (Common stonewort)).